Consider the following 496-residue polypeptide: Amino-acid acetyltransferase, mitochondrial (496 aa).

The N-acetyltransferase domain occupies 333-493 (YHGTDCLTNG…LDVIDSIQPT (161 aa)).

This sequence belongs to the acetyltransferase family.

Its subcellular location is the mitochondrion. It carries out the reaction L-glutamate + acetyl-CoA = N-acetyl-L-glutamate + CoA + H(+). The protein operates within amino-acid biosynthesis; L-arginine biosynthesis; N(2)-acetyl-L-ornithine from L-glutamate: step 1/4. In terms of biological role, N-acetylglutamate synthase involved in arginine biosynthesis. The protein is Amino-acid acetyltransferase, mitochondrial (arg2) of Schizosaccharomyces japonicus (strain yFS275 / FY16936) (Fission yeast).